The primary structure comprises 153 residues: Large ribosomal subunit protein uL30 (153 aa).

This sequence belongs to the universal ribosomal protein uL30 family. Part of the 50S ribosomal subunit.

This chain is Large ribosomal subunit protein uL30, found in Metallosphaera sedula (strain ATCC 51363 / DSM 5348 / JCM 9185 / NBRC 15509 / TH2).